We begin with the raw amino-acid sequence, 174 residues long: MPKLWDAVAGFAVTFGTLFKKPITEEYPEKPGPVAPRYHGRHQLNRYPDGLEKCIGCELCAWACPADAIYVEGDDNTADERYSPGERYGRVYQINYLRCIGCGLCIEACPTRALTMTNDYEMADDNRADLIWGKDKLLAPLQDGMLAPPHPMAPGATDDDYYLGRIGPATEDVR.

4Fe-4S ferredoxin-type domains are found at residues 44 to 74 (LNRY…VEGD) and 90 to 119 (RVYQ…MTND). [4Fe-4S] cluster is bound by residues Cys-54, Cys-57, Cys-60, Cys-64, Cys-99, Cys-102, Cys-105, and Cys-109.

The protein belongs to the complex I 23 kDa subunit family. NDH-1 is composed of 14 different subunits. Subunits NuoA, H, J, K, L, M, N constitute the membrane sector of the complex. [4Fe-4S] cluster is required as a cofactor.

Its subcellular location is the cell membrane. It catalyses the reaction a quinone + NADH + 5 H(+)(in) = a quinol + NAD(+) + 4 H(+)(out). NDH-1 shuttles electrons from NADH, via FMN and iron-sulfur (Fe-S) centers, to quinones in the respiratory chain. The immediate electron acceptor for the enzyme in this species is believed to be menaquinone. Couples the redox reaction to proton translocation (for every two electrons transferred, four hydrogen ions are translocated across the cytoplasmic membrane), and thus conserves the redox energy in a proton gradient. This is NADH-quinone oxidoreductase subunit I from Mycobacterium sp. (strain KMS).